A 278-amino-acid chain; its full sequence is Shikimate dehydrogenase (NADP(+)) (278 aa).

Residues 19-21 (SRS) and threonine 66 each bind shikimate. Catalysis depends on lysine 70, which acts as the Proton acceptor. Aspartate 82 lines the NADP(+) pocket. Shikimate is bound by residues asparagine 91 and aspartate 107. NADP(+)-binding positions include 133-137 (GAGGA), 157-162 (NRTRAK), and isoleucine 222. Residue tyrosine 224 participates in shikimate binding. Glycine 245 is a binding site for NADP(+).

This sequence belongs to the shikimate dehydrogenase family. In terms of assembly, homodimer.

The catalysed reaction is shikimate + NADP(+) = 3-dehydroshikimate + NADPH + H(+). It functions in the pathway metabolic intermediate biosynthesis; chorismate biosynthesis; chorismate from D-erythrose 4-phosphate and phosphoenolpyruvate: step 4/7. In terms of biological role, involved in the biosynthesis of the chorismate, which leads to the biosynthesis of aromatic amino acids. Catalyzes the reversible NADPH linked reduction of 3-dehydroshikimate (DHSA) to yield shikimate (SA). The sequence is that of Shikimate dehydrogenase (NADP(+)) from Dinoroseobacter shibae (strain DSM 16493 / NCIMB 14021 / DFL 12).